Consider the following 251-residue polypeptide: Triosephosphate isomerase (251 aa).

Asn9 to Lys11 is a binding site for substrate. Catalysis depends on His94, which acts as the Electrophile. The active-site Proton acceptor is Glu166. Residues Gly172, Ser211, and Gly232 to Gly233 each bind substrate.

It belongs to the triosephosphate isomerase family. In terms of assembly, homodimer.

It localises to the cytoplasm. The catalysed reaction is D-glyceraldehyde 3-phosphate = dihydroxyacetone phosphate. The protein operates within carbohydrate biosynthesis; gluconeogenesis. Its pathway is carbohydrate degradation; glycolysis; D-glyceraldehyde 3-phosphate from glycerone phosphate: step 1/1. Its function is as follows. Involved in the gluconeogenesis. Catalyzes stereospecifically the conversion of dihydroxyacetone phosphate (DHAP) to D-glyceraldehyde-3-phosphate (G3P). This chain is Triosephosphate isomerase, found in Xanthomonas axonopodis pv. citri (strain 306).